Here is a 464-residue protein sequence, read N- to C-terminus: E3 ubiquitin-protein ligase parkin (464 aa).

The Ubiquitin-like domain maps to 1-76; that stretch reads MIVFVRFNSS…VHIVQRPRRR (76 aa). A Phosphoserine; by PINK1 modification is found at Ser65. Residues 70–96 are disordered; it reads VQRPRRRSHETNASGGDEPQSTSEGSI. Positions 77 to 236 are necessary for PINK1-dependent localization to mitochondria; that stretch reads SHETNASGGD…LITSNRRSIP (160 aa). A Phosphothreonine modification is found at Thr80. The segment covering 80–96 has biased composition (polar residues); the sequence is TNASGGDEPQSTSEGSI. The RING-type 0; atypical zinc-finger motif lies at 140 to 224; that stretch reads PTYNSFFIYC…PTSDKDTSVA (85 aa). Thr174 bears the Phosphothreonine; by PINK1 mark. Residues 203–237 are SYT11 binding 1; the sequence is TRAEFFFKCGAHPTSDKDTSVALNLITSNRRSIPC. Thr216 is modified (phosphothreonine). Residues 233 to 464 form a TRIAD supradomain region; that stretch reads RSIPCIACTD…ACMGDHWFDV (232 aa). Residues Cys237, Cys240, Cys252, His256, Cys259, Cys262, Cys288, Cys292, Cys331, and Cys336 each coordinate Zn(2+). The segment at 237 to 292 adopts an RING-type 1 zinc-finger fold; that stretch reads CIACTDVRSPVLVFQCNHRHVICLDCFHLYCVTRLNDRQFVHDAQLGYSLPCVAGC. The interval 256–292 is SYT11 binding 2; it reads HVICLDCFHLYCVTRLNDRQFVHDAQLGYSLPCVAGC. An IBR-type zinc finger spans residues 312–376; the sequence is TRYQQYGAEE…CKEAYHEGDC (65 aa). Lys348 is covalently cross-linked (Glycyl lysine isopeptide (Lys-Gly) (interchain with G-Cter in ISG15)). Zn(2+) is bound by residues Cys351, Cys359, Cys364, and Cys367. Lys368 is covalently cross-linked (Glycyl lysine isopeptide (Lys-Gly) (interchain with G-Cter in ISG15)). The Zn(2+) site is built by His372 and Cys376. Residues 377–409 form an REP region; sequence DSLLEPSGATSQAYRVDKRAAEQARWEEASKET. Residues Cys417 and Cys420 each contribute to the Zn(2+) site. Residues 417-448 form an RING-type 2; atypical zinc finger; sequence CPRCNVPIEKNGGCMHMKCPQPQCKLEWCWNC. The active site involves Cys430. Zn(2+) is bound by residues Cys435, Cys440, Cys445, Cys448, Cys456, and His460.

This sequence belongs to the RBR family. Parkin subfamily. Forms an E3 ubiquitin ligase complex with UBE2L3 or UBE2L6. Mediates 'Lys-63'-linked polyubiquitination by associating with UBE2V1. Part of a SCF-like complex, consisting of PRKN, CUL1 and FBXW7. Interacts with SNCAIP. Binds to the C2A and C2B domains of SYT11. Interacts and regulates the turnover of SEPTIN5. Part of a complex, including STUB1, HSP70 and GPR37. The amount of STUB1 in the complex increases during ER stress. STUB1 promotes the dissociation of HSP70 from PRKN and GPR37, thus facilitating PRKN-mediated GPR37 ubiquitination. HSP70 transiently associates with unfolded GPR37 and inhibits the E3 activity of PRKN, whereas, STUB1 enhances the E3 activity of PRKN through promotion of dissociation of HSP70 from PRKN-GPR37 complexes. Interacts with PSMD4 and PACRG. Interacts with LRRK2. Interacts with RANBP2. Interacts with SUMO1 but not SUMO2, which promotes nuclear localization and autoubiquitination. Interacts (via first RING-type domain) with AIMP2 (via N-terminus). Interacts with PSMA7 and RNF41. Interacts with PINK1. Forms a complex with PINK1 and PARK7. Interacts with CHPF, the interaction with isoform 2 may facilitate PRKN transport into the mitochondria. Interacts with MFN2 (phosphorylated), promotes PRKN localization in dysfunctional depolarized mitochondria. Interacts with FBXO7; this promotes translocation to dysfunctional depolarized mitochondria. Interacts with ZNF746. Interacts with heat shock protein 70 family members, including HSPA1L, HSPA1A and HSPA8; interaction HSPA1L promotes translocation to damaged mitochondria. Interacts with BAG4 and, to a lesser extent, BAG5; interaction with BAG4 inhibits translocation to damaged mitochondria. Forms a complex with PRKN and PARK7. Interacts with AMBRA1. In terms of processing, auto-ubiquitinates in an E2-dependent manner leading to its own degradation. Also polyubiquitinated by RNF41 for proteasomal degradation. S-nitrosylated. Post-translationally, phosphorylated. Activation requires phosphorylation at Ser-65 by PINK1 and binding to PINK1 phosphorylated ubiquitin. Phosphorylation at Thr-174 by PINK1 and at Thr-216 is important for mitochondrial localization. Expressed in all subdivisions of the brain (at protein level). Highly expressed in brainstem, cranial nerve, pontine, cerebellar nuclei, indusium griseum, nuclei reticularis, strata oriens and laccunosum moleculare of the hippocampal CA2 region. Low levels were found in the telencephalon and diencephalon. Expressed in heart, liver, skeletal muscle, kidney and testis.

It is found in the cytoplasm. The protein resides in the cytosol. Its subcellular location is the nucleus. It localises to the endoplasmic reticulum. The protein localises to the mitochondrion. It is found in the mitochondrion outer membrane. The protein resides in the cell projection. Its subcellular location is the neuron projection. It localises to the postsynaptic density. The protein localises to the presynapse. The enzyme catalyses [E2 ubiquitin-conjugating enzyme]-S-ubiquitinyl-L-cysteine + [acceptor protein]-L-lysine = [E2 ubiquitin-conjugating enzyme]-L-cysteine + [acceptor protein]-N(6)-ubiquitinyl-L-lysine.. It functions in the pathway protein modification; protein ubiquitination. With respect to regulation, in the autoinhibited state the side chain of Phe-462 inserts into a hydrophobic groove in RING-0, occluding the ubiquitin acceptor site Cys-430, whereas the REP repressor element binds RING-1 and blocks its E2-binding site. Activation of PRKN requires 2 steps: (1) phosphorylation at Ser-65 by PINK1 and (2) binding to phosphorylated ubiquitin, leading to unlock repression of the catalytic Cys-430 by the RING-0 region via an allosteric mechanism and converting PRKN to its fully-active form. According to another report, phosphorylation at Ser-65 by PINK1 is not essential for activation and only binding to phosphorylated ubiquitin is essential to unlock repression. In addition, ISG15 conjugation positively regulates its ubiquitin E3 ligase activity by suppressing the intramolecular interaction that maintains its autoinhibited conformation. Functions within a multiprotein E3 ubiquitin ligase complex, catalyzing the covalent attachment of ubiquitin moieties onto substrate proteins. Substrates include SYT11 and VDAC1. Other substrates are BCL2, CCNE1, GPR37, RHOT1/MIRO1, MFN1, MFN2, STUB1, SNCAIP, SEPTIN5, TOMM20, USP30, ZNF746, MIRO1 and AIMP2. Mediates monoubiquitination as well as 'Lys-6', 'Lys-11', 'Lys-48'-linked and 'Lys-63'-linked polyubiquitination of substrates depending on the context. Participates in the removal and/or detoxification of abnormally folded or damaged protein by mediating 'Lys-63'-linked polyubiquitination of misfolded proteins such as PARK7: 'Lys-63'-linked polyubiquitinated misfolded proteins are then recognized by HDAC6, leading to their recruitment to aggresomes, followed by degradation. Mediates 'Lys-63'-linked polyubiquitination of a 22 kDa O-linked glycosylated isoform of SNCAIP, possibly playing a role in Lewy-body formation. Mediates monoubiquitination of BCL2, thereby acting as a positive regulator of autophagy. Protects against mitochondrial dysfunction during cellular stress, by acting downstream of PINK1 to coordinate mitochondrial quality control mechanisms that remove and replace dysfunctional mitochondrial components. Depending on the severity of mitochondrial damage and/or dysfunction, activity ranges from preventing apoptosis and stimulating mitochondrial biogenesis to regulating mitochondrial dynamics and eliminating severely damaged mitochondria via mitophagy. Activation and recruitment onto the outer membrane of damaged/dysfunctional mitochondria (OMM) requires PINK1-mediated phosphorylation of both PRKN and ubiquitin. After mitochondrial damage, functions with PINK1 to mediate the decision between mitophagy or preventing apoptosis by inducing either the poly- or monoubiquitination of VDAC1, respectively; polyubiquitination of VDAC1 promotes mitophagy, while monoubiquitination of VDAC1 decreases mitochondrial calcium influx which ultimately inhibits apoptosis. When cellular stress results in irreversible mitochondrial damage, promotes the autophagic degradation of dysfunctional depolarized mitochondria (mitophagy) by promoting the ubiquitination of mitochondrial proteins such as TOMM20, RHOT1/MIRO1, MFN1 and USP30. Preferentially assembles 'Lys-6'-, 'Lys-11'- and 'Lys-63'-linked polyubiquitin chains, leading to mitophagy. The PINK1-PRKN pathway also promotes fission of damaged mitochondria by PINK1-mediated phosphorylation which promotes the PRKN-dependent degradation of mitochondrial proteins involved in fission such as MFN2. This prevents the refusion of unhealthy mitochondria with the mitochondrial network or initiates mitochondrial fragmentation facilitating their later engulfment by autophagosomes. Regulates motility of damaged mitochondria via the ubiquitination and subsequent degradation of MIRO1 and MIRO2; in motor neurons, this likely inhibits mitochondrial intracellular anterograde transport along the axons which probably increases the chance of the mitochondria undergoing mitophagy in the soma. Involved in mitochondrial biogenesis via the 'Lys-48'-linked polyubiquitination of transcriptional repressor ZNF746/PARIS which leads to its subsequent proteasomal degradation and allows activation of the transcription factor PPARGC1A. Limits the production of reactive oxygen species (ROS). Regulates cyclin-E during neuronal apoptosis. In collaboration with CHPF isoform 2, may enhance cell viability and protect cells from oxidative stress. Independently of its ubiquitin ligase activity, protects from apoptosis by the transcriptional repression of p53/TP53. May protect neurons against alpha synuclein toxicity, proteasomal dysfunction, GPR37 accumulation, and kainate-induced excitotoxicity. May play a role in controlling neurotransmitter trafficking at the presynaptic terminal and in calcium-dependent exocytosis. May represent a tumor suppressor gene. This Mus musculus (Mouse) protein is E3 ubiquitin-protein ligase parkin.